Reading from the N-terminus, the 157-residue chain is Succinate dehydrogenase assembly factor 2-B, mitochondrial (157 aa).

Residues M1–R22 constitute a mitochondrion transit peptide.

The protein belongs to the SDHAF2 family. In terms of assembly, interacts with the flavoprotein subunit within the SDH catalytic dimer.

It is found in the mitochondrion matrix. In terms of biological role, plays an essential role in the assembly of succinate dehydrogenase (SDH), an enzyme complex (also referred to as respiratory complex II) that is a component of both the tricarboxylic acid (TCA) cycle and the mitochondrial electron transport chain, and which couples the oxidation of succinate to fumarate with the reduction of ubiquinone (coenzyme Q) to ubiquinol. Required for flavinylation (covalent attachment of FAD) of the flavoprotein subunit of the SDH catalytic dimer. This chain is Succinate dehydrogenase assembly factor 2-B, mitochondrial, found in Drosophila mojavensis (Fruit fly).